The sequence spans 364 residues: Probable dual-specificity RNA methyltransferase RlmN (364 aa).

Residue Glu109 is the Proton acceptor of the active site. One can recognise a Radical SAM core domain in the interval 123–351 (PKARLTVCVS…VSVRYSRGLE (229 aa)). Cys130 and Cys356 are oxidised to a cystine. The [4Fe-4S] cluster site is built by Cys137, Cys141, and Cys144. Residues 184-185 (GE), Ser214, 237-239 (SLH), and Asn313 each bind S-adenosyl-L-methionine. Residue Cys356 is the S-methylcysteine intermediate of the active site.

The protein belongs to the radical SAM superfamily. RlmN family. The cofactor is [4Fe-4S] cluster.

It is found in the cytoplasm. It catalyses the reaction adenosine(2503) in 23S rRNA + 2 reduced [2Fe-2S]-[ferredoxin] + 2 S-adenosyl-L-methionine = 2-methyladenosine(2503) in 23S rRNA + 5'-deoxyadenosine + L-methionine + 2 oxidized [2Fe-2S]-[ferredoxin] + S-adenosyl-L-homocysteine. The enzyme catalyses adenosine(37) in tRNA + 2 reduced [2Fe-2S]-[ferredoxin] + 2 S-adenosyl-L-methionine = 2-methyladenosine(37) in tRNA + 5'-deoxyadenosine + L-methionine + 2 oxidized [2Fe-2S]-[ferredoxin] + S-adenosyl-L-homocysteine. Its function is as follows. Specifically methylates position 2 of adenine 2503 in 23S rRNA and position 2 of adenine 37 in tRNAs. The chain is Probable dual-specificity RNA methyltransferase RlmN from Nostoc punctiforme (strain ATCC 29133 / PCC 73102).